Here is a 627-residue protein sequence, read N- to C-terminus: (-)-alpha-pinene synthase 2, chloroplastic (627 aa).

The transit peptide at 1–36 (MALVSVAPMASRSCLHKSLSSSAHELKTICRTIPTL) directs the protein to the chloroplast. Mg(2+) contacts are provided by Asp378, Asp382, and Asp530. Residues 378–382 (DDMYD) carry the DDXXD motif motif.

Belongs to the terpene synthase family. Tpsd subfamily. Requires Mg(2+) as cofactor. The cofactor is Mn(2+).

It localises to the plastid. The protein resides in the chloroplast. The catalysed reaction is (2E)-geranyl diphosphate = (1S,5S)-alpha-pinene + diphosphate. It carries out the reaction (2E)-geranyl diphosphate = (1S,5S)-beta-pinene + diphosphate. It functions in the pathway terpene metabolism; oleoresin biosynthesis. Involved in defensive oleoresin formation in conifers in response to insect attack or other injury. Involved in monoterpene (C10) olefins biosynthesis. A mixture of alpha- and beta-pinene (35:10) is produced by this enzyme. This is (-)-alpha-pinene synthase 2, chloroplastic from Picea sitchensis (Sitka spruce).